Here is a 411-residue protein sequence, read N- to C-terminus: Serine--tRNA ligase (411 aa).

Residue 226 to 228 (TSE) participates in L-serine binding. 257-259 (RQE) contributes to the ATP binding site. E280 serves as a coordination point for L-serine. 344-347 (EISS) is an ATP binding site. S379 contacts L-serine.

Belongs to the class-II aminoacyl-tRNA synthetase family. Type-1 seryl-tRNA synthetase subfamily. As to quaternary structure, homodimer. The tRNA molecule binds across the dimer.

The protein localises to the cytoplasm. It carries out the reaction tRNA(Ser) + L-serine + ATP = L-seryl-tRNA(Ser) + AMP + diphosphate + H(+). The catalysed reaction is tRNA(Sec) + L-serine + ATP = L-seryl-tRNA(Sec) + AMP + diphosphate + H(+). It participates in aminoacyl-tRNA biosynthesis; selenocysteinyl-tRNA(Sec) biosynthesis; L-seryl-tRNA(Sec) from L-serine and tRNA(Sec): step 1/1. Its function is as follows. Catalyzes the attachment of serine to tRNA(Ser). Is also able to aminoacylate tRNA(Sec) with serine, to form the misacylated tRNA L-seryl-tRNA(Sec), which will be further converted into selenocysteinyl-tRNA(Sec). This chain is Serine--tRNA ligase, found in Campylobacter lari (strain RM2100 / D67 / ATCC BAA-1060).